We begin with the raw amino-acid sequence, 99 residues long: Pterin-4-alpha-carbinolamine dehydratase (99 aa).

Belongs to the pterin-4-alpha-carbinolamine dehydratase family.

The enzyme catalyses (4aS,6R)-4a-hydroxy-L-erythro-5,6,7,8-tetrahydrobiopterin = (6R)-L-erythro-6,7-dihydrobiopterin + H2O. Its function is as follows. Involved in tetrahydrobiopterin biosynthesis. This Dictyostelium discoideum (Social amoeba) protein is Pterin-4-alpha-carbinolamine dehydratase (pcbd).